Consider the following 895-residue polypeptide: AP-1 complex subunit gamma (895 aa).

5 HEAT repeats span residues 130–166 (TAMARDISPEIEKVISHSNPYIRKKAALCAIRVLRKV), 167–205 (PDLTENYIPKIKALLSERNHAVILTALTLIIEICEMDST), 211–256 (KKMV…ILGQ), 301–339 (NGLKVMAINILGRFLLNRDNNIRYVALNTLSRVVNTDIQ), and 341–376 (VQRHRNTIVECLKDPDVSIRCRALDLIYSLVTESNI). Disordered regions lie at residues 591–687 (KQEE…MNNM), 706–733 (NNNSMGGMMNNNNNNNNNNNNNNNNNKS), and 746–770 (QLTPTPQQPQSQSQQALSPTNQTSV). Composition is skewed to low complexity over residues 604 to 626 (PTQTPPQQHYQQQQQQPQQQSSQ), 639 to 658 (QSSANSGNNNNNNNKQGGNA), 675 to 687 (NGNMNNNNNMNNM), 706 to 731 (NNNSMGGMMNNNNNNNNNNNNNNNNN), and 746 to 765 (QLTPTPQQPQSQSQQALSPT). A GAE domain is found at 775-893 (PQPLTFLVYQ…SDVPDTPLPS (119 aa)).

Belongs to the adaptor complexes large subunit family. Adaptor protein complex 1 (AP-1) is a heterotetramer composed of two large adaptins (gamma-type subunit and beta-type subunit), a medium adaptin (mu-type subunit) and a small adaptin (sigma-type subunit). Interacts with rhgA.

The protein localises to the golgi apparatus. It is found in the trans-Golgi network. Its subcellular location is the cytoplasmic vesicle. It localises to the clathrin-coated vesicle membrane. Subunit of clathrin-associated adaptor protein complex 1 that plays a role in protein sorting in the trans-Golgi network (TGN) and endosomes. The AP complexes mediate the recruitment of clathrin to membranes and the recognition of sorting signals within the cytosolic tails of transmembrane cargo molecules. Also involved in early steps of phagocytosis and macropinocytosis. The sequence is that of AP-1 complex subunit gamma (ap1g1) from Dictyostelium discoideum (Social amoeba).